Consider the following 399-residue polypeptide: S-adenosylmethionine synthase (399 aa).

His-15 lines the ATP pocket. Asp-17 serves as a coordination point for Mg(2+). K(+) is bound at residue Glu-43. 2 residues coordinate L-methionine: Glu-56 and Gln-99. The interval 99–109 (QSPDIADGVDH) is flexible loop. ATP-binding positions include 175–177 (DAK), 242–243 (RF), Asp-251, 257–258 (RK), Ala-274, and Lys-278. Asp-251 contributes to the L-methionine binding site. Residue Lys-282 participates in L-methionine binding.

This sequence belongs to the AdoMet synthase family. In terms of assembly, homotetramer; dimer of dimers. Mg(2+) serves as cofactor. It depends on K(+) as a cofactor.

It localises to the cytoplasm. It catalyses the reaction L-methionine + ATP + H2O = S-adenosyl-L-methionine + phosphate + diphosphate. It functions in the pathway amino-acid biosynthesis; S-adenosyl-L-methionine biosynthesis; S-adenosyl-L-methionine from L-methionine: step 1/1. Functionally, catalyzes the formation of S-adenosylmethionine (AdoMet) from methionine and ATP. The overall synthetic reaction is composed of two sequential steps, AdoMet formation and the subsequent tripolyphosphate hydrolysis which occurs prior to release of AdoMet from the enzyme. The chain is S-adenosylmethionine synthase from Lactobacillus acidophilus (strain ATCC 700396 / NCK56 / N2 / NCFM).